The sequence spans 416 residues: N-acetyl-L-cysteine deacetylase (416 aa).

Cys-128, His-130, Glu-164, His-188, and His-380 together coordinate Zn(2+).

The protein belongs to the peptidase M20 family. Zn(2+) is required as a cofactor. Requires Co(2+) as cofactor.

The catalysed reaction is N-acetyl-L-cysteine + H2O = L-cysteine + acetate. It participates in amino-acid metabolism. Its function is as follows. Involved in a cysteine salvage pathway from S-alkylcysteine. Catalyzes the last step in this pathway, i.e. the deacetylation of N-acetyl-L-cysteine. This pathway is likely important in the catabolism of alkylated cysteine generated by proteolysis of alkylated glutathione formed in the detoxification of a wide range of electrophiles. This chain is N-acetyl-L-cysteine deacetylase, found in Bacillus subtilis (strain 168).